Here is a 497-residue protein sequence, read N- to C-terminus: Sperm motility kinase Z (497 aa).

Positions 28–275 (YTVLKTLSQH…AQDLLSHPWL (248 aa)) constitute a Protein kinase domain. ATP contacts are provided by residues 34–42 (LSQHGTTEV) and K57. D146 (proton acceptor) is an active-site residue. The region spanning 292–332 (FPDPDIMAAMKNIGFHVQDIRESLKHRKFDETMATYNLLRA) is the UBA domain. Disordered regions lie at residues 383–410 (TEEH…GRSQ) and 439–460 (SSQA…SCPL).

Belongs to the protein kinase superfamily. CAMK Ser/Thr protein kinase family. Smok subfamily.

It carries out the reaction L-seryl-[protein] + ATP = O-phospho-L-seryl-[protein] + ADP + H(+). The enzyme catalyses L-threonyl-[protein] + ATP = O-phospho-L-threonyl-[protein] + ADP + H(+). Its function is as follows. May play a role in sperm motility, especially in the regulation of flagellar function. In Mus musculus (Mouse), this protein is Sperm motility kinase Z (Gm4922).